A 570-amino-acid chain; its full sequence is Ribosome-inactivating protein SNAI (570 aa).

The signal sequence occupies residues 1–28 (MRLVAKLLYLAVLAICGLGIHGALTHPR). 3 N-linked (GlcNAc...) asparagine glycosylation sites follow: Asn-40, Asn-62, and Asn-144. The active site involves Glu-199. An N-linked (GlcNAc...) asparagine glycan is attached at Asn-260. 3 disulfide bridges follow: Cys-284-Cys-316, Cys-332-Cys-351, and Cys-373-Cys-385. Ricin B-type lectin domains follow at residues 319–439 (VEVT…WTVG) and 441–566 (VEPL…WITT). The 1-alpha repeat unit spans residues 329–369 (DGLCVDVRYGHYIDGNPVQLRPCGNECNQLWTFRTDGTIRW). Residues 370-405 (LGKCLTASSSVMIYDCNTVPPEATKWVVSIDGTITN) form a 1-beta repeat. A 1-gamma repeat occupies 408–440 (SGLVLTAPQAAEGTALSLENNIHAARQGWTVGD). The 2-alpha repeat unit spans residues 452–489 (KQMCLRENGENNFVWLEDCVLNRVQQEWALYGDGTIRV). Residues Cys-455 and Cys-470 are joined by a disulfide bond. A glycan (N-linked (GlcNAc...) asparagine) is linked at Asn-492. Residues 493–531 (RSLCVTSEDHEPSDLIVILKCEGSGNQRWVFNTNGTISN) form a 2-beta repeat. The cysteines at positions 496 and 513 are disulfide-linked. Residue Asn-526 is glycosylated (N-linked (GlcNAc...) asparagine). The 2-gamma repeat unit spans residues 534–567 (AKLLMDVAQRDVSLRKIILYRPTGNPNQQWITTT).

Belongs to the ribosome-inactivating protein family. Type 2 RIP subfamily. As to quaternary structure, tetramer of four pairs of disulfide bound A-B chains. In terms of processing, the precursor is processed in two chains, A and B, that are linked by a disulfide bond. A small truncated form corresponding roughly to the second ricin B-type lectin domain of the B chain, TrSNAI, can also be produced. Glycosylated. N-glycans of subunit A are (Man)2-3(Xyl)(GlcNAc)2(Fuc) at Asn-40, (GlcNAc)0-2(Man)3(Xyl)(GlcNAc)2(Fuc) or (Man)1-2(GlcNAc)2 at Asn-62, (Man)3(Xyl)(GlcNAc)2(Fuc)0-1 at Asn-144 and (GlcNAc)0-1(Man)3(Xyl)(GlcNAc)2(Fuc) at Asn-260. N-glycans of subunit B are (Man)3(Xyl)(GlcNAc)2(Fuc) at Asn-492 and (Man)6-9(GlcNAc)2 at Asn-526. In terms of tissue distribution, expressed in bark.

It catalyses the reaction Endohydrolysis of the N-glycosidic bond at one specific adenosine on the 28S rRNA.. Its function is as follows. Neu5Ac(alpha2-6)Gal/GalNAc specific agglutinin. Behaves as a type-2 ribosome-inactivating protein. Strongly inhibits mammalian but not plant ribosomes. The A chain is responsible for inhibiting protein synthesis through the catalytic inactivation of 60S ribosomal subunits by removing adenine from position 4,324 of 28S rRNA. The B chain binds to cell receptors and probably facilitates the entry into the cell of the A chain; B chains are also responsible for cell agglutination (lectin activity). Involved in plant defense against insects. Binds Neu5Ac(alpha2-6)Gal/GalNAc but has no clear agglutination activity. The polypeptide is Ribosome-inactivating protein SNAI (Sambucus nigra (European elder)).